The chain runs to 312 residues: Methionyl-tRNA formyltransferase (312 aa).

110–113 (SLLP) lines the (6S)-5,6,7,8-tetrahydrofolate pocket.

This sequence belongs to the Fmt family.

It carries out the reaction L-methionyl-tRNA(fMet) + (6R)-10-formyltetrahydrofolate = N-formyl-L-methionyl-tRNA(fMet) + (6S)-5,6,7,8-tetrahydrofolate + H(+). Attaches a formyl group to the free amino group of methionyl-tRNA(fMet). The formyl group appears to play a dual role in the initiator identity of N-formylmethionyl-tRNA by promoting its recognition by IF2 and preventing the misappropriation of this tRNA by the elongation apparatus. This Streptococcus suis (strain 05ZYH33) protein is Methionyl-tRNA formyltransferase.